The following is a 561-amino-acid chain: Excitatory amino acid transporter 4 (561 aa).

The Cytoplasmic portion of the chain corresponds to 1–52 (MSSHGNSLFLRESGAGGGCLQGLQDSLQQRALRTRLRLQTMTREHVRRFLRR). Serine 2 is modified (phosphoserine). 3 helical membrane-spanning segments follow: residues 53–73 (NAFI…AFAL), 96–116 (MLQM…MASL), and 130–150 (VYYM…VTII). 3 N-linked (GlcNAc...) asparagine glycosylation sites follow: asparagine 213, asparagine 229, and asparagine 236. The next 3 membrane-spanning stretches (helical) occupy residues 259–282 (SANG…IGGM), 292–319 (FFDS…LFLI), and 341–362 (LTVI…YFLV). The discontinuously helical intramembrane region spans 368–398 (FPFIGGILQALITAMGTSSSSATLPITFRCL). 385–387 (SSS) contributes to the L-aspartate binding site. A helical membrane pass occupies residues 408-434 (ITRFVLPVGATVNMDGTALYEALAAIF). Na(+) contacts are provided by glycine 416, threonine 418, and asparagine 420. Residues threonine 424, 465–469 (IPQAG), aspartate 498, and asparagine 505 contribute to the L-aspartate site. The segment at residues 448-481 (ITTISITATAASVGAAGIPQAGLVTMVIVLTSVG) is an intramembrane region (discontinuously helical). The chain crosses the membrane as a helical span at residues 495–516 (WFLDRLRTMTNVLGDSIGAAVI). Residues asparagine 505 and aspartate 509 each coordinate Na(+).

Belongs to the dicarboxylate/amino acid:cation symporter (DAACS) (TC 2.A.23) family. SLC1A6 subfamily. In terms of assembly, homotrimer.

It localises to the cell membrane. It catalyses the reaction K(+)(in) + L-glutamate(out) + 3 Na(+)(out) + H(+)(out) = K(+)(out) + L-glutamate(in) + 3 Na(+)(in) + H(+)(in). The catalysed reaction is K(+)(in) + L-aspartate(out) + 3 Na(+)(out) + H(+)(out) = K(+)(out) + L-aspartate(in) + 3 Na(+)(in) + H(+)(in). It carries out the reaction D-aspartate(out) + K(+)(in) + 3 Na(+)(out) + H(+)(out) = D-aspartate(in) + K(+)(out) + 3 Na(+)(in) + H(+)(in). Sodium-dependent, high-affinity amino acid transporter that mediates the uptake of L-glutamate and also L-aspartate and D-aspartate. Functions as a symporter that transports one amino acid molecule together with two or three Na(+) ions and one proton, in parallel with the counter-transport of one K(+) ion. Mediates Cl(-) flux that is not coupled to amino acid transport; this avoids the accumulation of negative charges due to aspartate and Na(+) symport. Plays a redundant role in the rapid removal of released glutamate from the synaptic cleft, which is essential for terminating the postsynaptic action of glutamate. In Rattus norvegicus (Rat), this protein is Excitatory amino acid transporter 4 (Slc1a6).